We begin with the raw amino-acid sequence, 273 residues long: DnaJ homolog subfamily C member 27-A (273 aa).

GTP contacts are provided by residues 23–30, 71–75, and 134–137; these read GNAEVGKS, DMAGH, and NKID. The 57-residue stretch at 217 to 273 folds into the J domain; the sequence is DSWDMLGVKPGATRDEVNKAYRKLAVLLHPDKCMAPGSEDAFKAVVNARTALLKNIK.

It belongs to the small GTPase superfamily. Rab family.

It is found in the nucleus. Its function is as follows. GTPase possibly involved in regulation of the MEK/ERK pathway. The polypeptide is DnaJ homolog subfamily C member 27-A (dnajc27-a) (Xenopus laevis (African clawed frog)).